A 138-amino-acid polypeptide reads, in one-letter code: Phospholipase A2 EC1 (138 aa).

A signal peptide spans Met1 to Gly16. Intrachain disulfides connect Cys42–Cys131, Cys44–Cys60, Cys59–Cys111, Cys65–Cys138, Cys66–Cys104, Cys73–Cys97, and Cys91–Cys102. Ca(2+) is bound by residues Tyr43, Gly45, and Gly47. His63 is an active-site residue. Asp64 provides a ligand contact to Ca(2+). Residue Asp105 is part of the active site.

This sequence belongs to the phospholipase A2 family. Group II subfamily. The cofactor is Ca(2+).

Its subcellular location is the secreted. It carries out the reaction a 1,2-diacyl-sn-glycero-3-phosphocholine + H2O = a 1-acyl-sn-glycero-3-phosphocholine + a fatty acid + H(+). The chain is Phospholipase A2 EC1 from Echis coloratus (Carpet viper).